Here is a 230-residue protein sequence, read N- to C-terminus: Protein FAM3A (230 aa).

An N-terminal signal peptide occupies residues methionine 1 to glycine 33. Cystine bridges form between cysteine 59–cysteine 87 and cysteine 65–cysteine 222. The GG-type lectin domain maps to glutamate 68–arginine 226.

This sequence belongs to the FAM3 family. In similar amounts in testis, pancreas, adrenal, placenta, brain, fetal brain, liver, kidney, skeletal muscle and heart.

It is found in the secreted. In terms of biological role, may act as a defensin against invading fungal microorganisms. The protein is Protein FAM3A (FAM3A) of Homo sapiens (Human).